The sequence spans 433 residues: MYPGRAKPTYNNQQAQQAQSQVGYQTGYSNAQPQQQYYTAPQQQNVSGSSMSFQHQFYPPPNQSPPQYNTGQYARPAAPPPGQQNYRNDIQQNHASGTVNGPSGYQQPQAMYKPPSQVQHTGPNNQVAYQYSQCTGRRKALLIGINYFGSANELRGCINDSHNMFNFLTQRYGYKAEDIVMLNDDTTDPVRVPTKANMLRAMQWLVKDARPNDALFFHYSGHGGQTEDLDGDEEDGMDDVIYPVDFQMAGHIVDDDMHAIMVSPLQPGVRLTALFDSCHSGTVLDLPYTYSTKGVIKEPNMWKDVGSSGLQAAMAYATGNTTSLVSSLGNVFTTITKSNNNVDRERVKQIKFSPADVIMFSGSKDNQTSADATENGQNTGAMSWAFLTVLSKQPQQSYLSLLQNMRAELSSKYTQKPQLSCSHEIDTNLQFLL.

The disordered stretch occupies residues 1-123 (MYPGRAKPTY…PPSQVQHTGP (123 aa)). A compositionally biased stretch (low complexity) spans 9–44 (TYNNQQAQQAQSQVGYQTGYSNAQPQQQYYTAPQQQ). Polar residues-rich tracts occupy residues 45–55 (NVSGSSMSFQH) and 83–109 (QQNYRNDIQQNHASGTVNGPSGYQQPQ). Active-site residues include His222 and Cys278.

The protein belongs to the peptidase C14B family.

Functionally, involved in cell death (apoptosis). This chain is Metacaspase-1 (MCA1), found in Kluyveromyces lactis (strain ATCC 8585 / CBS 2359 / DSM 70799 / NBRC 1267 / NRRL Y-1140 / WM37) (Yeast).